Reading from the N-terminus, the 663-residue chain is Leishmanolysin-like peptidase (663 aa).

A Zn(2+)-binding site is contributed by histidine 246. Residue glutamate 247 is part of the active site. Residues histidine 250 and histidine 353 each coordinate Zn(2+).

It belongs to the peptidase M8 family. It depends on Zn(2+) as a cofactor.

It is found in the cytoplasm. Essential for the coordination of mitotic progression, and also plays a role in cell migration. This Caenorhabditis elegans protein is Leishmanolysin-like peptidase.